A 256-amino-acid polypeptide reads, in one-letter code: Expansin-like B1 (256 aa).

The signal sequence occupies residues 1-24; sequence MAQLLRRHLPVILSLILFLSKATA. An N-linked (GlcNAc...) asparagine glycan is attached at Asn-27. The 105-residue stretch at 46–150 folds into the Expansin-like EG45 domain; sequence NGACEYGAFG…RRVSCTYPNK (105 aa). Residues 164 to 249 enclose the Expansin-like CBD domain; sequence NYLEFEIWYQ…NWTAGATYDS (86 aa). N-linked (GlcNAc...) asparagine glycans are attached at residues Asn-189 and Asn-240.

The protein belongs to the expansin family. Expansin-like B subfamily.

The protein resides in the secreted. This is Expansin-like B1 (EXLB1) from Oryza sativa subsp. japonica (Rice).